The primary structure comprises 154 residues: Universal stress protein Sll1388 (154 aa).

Belongs to the universal stress protein A family.

This Synechocystis sp. (strain ATCC 27184 / PCC 6803 / Kazusa) protein is Universal stress protein Sll1388.